The sequence spans 273 residues: MYRLAAFDMDGTLLMRDHRIGGATLNALHQLVDNGMILTFATGRHYLDMKGILSHSGINGYLITGNGTRVCDMDGMHLDGMDLPAELVEFVLRTPWQTNASIHIFRDDGWFTDYNDPALLAAHKTSSFQFQLTALDALPKTGNHKICFIAPHQELAELKIQLEQHMGDQADFCFSAVDCLEMLPRGCNKGAALERLSHHLDLTLADCMAFGDAMNDKEMLSRVGRGLVMGNALPQLKQELPQLQVIGRCEEQGVAHYLQHWLSSPHLTYSPEF.

The active-site Nucleophile is the Asp-8. The Mg(2+) site is built by Asp-8, Asp-10, and Asp-212.

Belongs to the HAD-like hydrolase superfamily. Cof family. Mg(2+) is required as a cofactor.

It catalyses the reaction 4-amino-2-methyl-5-(diphosphooxymethyl)pyrimidine + H2O = 4-amino-2-methyl-5-(phosphooxymethyl)pyrimidine + phosphate + H(+). Its function is as follows. Catalyzes the hydrolysis of 4-amino-2-methyl-5-hydroxymethylpyrimidine pyrophosphate (HMP-PP) to 4-amino-2-methyl-5-hydroxymethylpyrimidine phosphate (HMP-P). This chain is HMP-PP phosphatase, found in Yersinia enterocolitica serotype O:8 / biotype 1B (strain NCTC 13174 / 8081).